Consider the following 375-residue polypeptide: Protein arginine N-methyltransferase 6 (375 aa).

The tract at residues 1–36 is disordered; it reads MSQPKRRKLESGGGGEGGEGTEEEDGGELEVAVPRP. The segment covering 19-28 has biased composition (acidic residues); sequence EGTEEEDGGE. Thr-21 carries the phosphothreonine modification. Arg-38 carries the post-translational modification Asymmetric dimethylarginine; by autocatalysis. The region spanning 44–374 is the SAM-dependent MTase PRMT-type domain; sequence DQLYYQCYSD…EEKTKDFAME (331 aa). Residues His-57, Arg-66, Gly-90, Glu-112, and Glu-141 each contribute to the S-adenosyl-L-methionine site. Catalysis depends on residues Glu-155 and Glu-164.

The protein belongs to the class I-like SAM-binding methyltransferase superfamily. Protein arginine N-methyltransferase family. PRMT6 subfamily. As to quaternary structure, interacts with (and methylates) HIV-1 Tat, Rev and Nucleocapsid protein p7 (NC). Interacts with EPB41L3 and NCOA1. Post-translationally, automethylation enhances its stability.

The protein resides in the nucleus. The enzyme catalyses L-arginyl-[protein] + 2 S-adenosyl-L-methionine = N(omega),N(omega)-dimethyl-L-arginyl-[protein] + 2 S-adenosyl-L-homocysteine + 2 H(+). In terms of biological role, arginine methyltransferase that can catalyze the formation of both omega-N monomethylarginine (MMA) and asymmetrical dimethylarginine (aDMA), with a strong preference for the formation of aDMA. Preferentially methylates arginyl residues present in a glycine and arginine-rich domain and displays preference for monomethylated substrates. Specifically mediates the asymmetric dimethylation of histone H3 'Arg-2' to form H3R2me2a. H3R2me2a represents a specific tag for epigenetic transcriptional repression and is mutually exclusive with methylation on histone H3 'Lys-4' (H3K4me2 and H3K4me3). Acts as a transcriptional repressor of various genes such as HOXA2, THBS1 and TP53. Repression of TP53 blocks cellular senescence. Also methylates histone H2A and H4 'Arg-3' (H2AR3me and H4R3me, respectively). Acts as a regulator of DNA base excision during DNA repair by mediating the methylation of DNA polymerase beta (POLB), leading to the stimulation of its polymerase activity by enhancing DNA binding and processivity. Methylates HMGA1. Regulates alternative splicing events. Acts as a transcriptional coactivator of a number of steroid hormone receptors including ESR1, ESR2, PGR and NR3C1. Promotes fasting-induced transcriptional activation of the gluconeogenic program through methylation of the CRTC2 transcription coactivator. Methylates GPS2, protecting GPS2 from ubiquitination and degradation. Methylates SIRT7, inhibiting SIRT7 histone deacetylase activity and promoting mitochondria biogenesis. The polypeptide is Protein arginine N-methyltransferase 6 (PRMT6) (Bos taurus (Bovine)).